A 63-amino-acid polypeptide reads, in one-letter code: Conotoxin Cl14.11 (63 aa).

Residues 1–21 (MRFLLLLTVALLLTCIMETDA) form the signal peptide. The propeptide occupies 22–34 (EAKPEDLAERFRE).

Contains 2 disulfide bond. In terms of tissue distribution, expressed by the venom duct.

The protein resides in the secreted. The chain is Conotoxin Cl14.11 from Californiconus californicus (California cone).